We begin with the raw amino-acid sequence, 254 residues long: MIALLSPAKTLDLTKPNLDIETSKPIFISEAEVIMNNLKELEIQDLCPLMKISEDLGVQTFTKIQDWNTIYYGDEKPFVLSFKGEAYRGLDADDFTKEDLEFCNDSLRILSGLYGALKPLDGTKAYRLEMGTKISIDGSKNLYDFWGNKIMEAVLKDLENHKEKVIINLASNEYYKSIKKIEKKVRVITPVFKERKGIEYKVVTVYAKKARGQMVRYITKNRITKSEDIKNFDLDGYEFNERLSEGDTWVFTRD.

This sequence belongs to the UPF0246 family.

In Clostridium perfringens (strain ATCC 13124 / DSM 756 / JCM 1290 / NCIMB 6125 / NCTC 8237 / Type A), this protein is UPF0246 protein CPF_2407.